The following is a 691-amino-acid chain: UvrABC system protein C (691 aa).

In terms of domain architecture, GIY-YIG spans 20 to 97 (STSGVYLWKD…IKKHTPRYNI (78 aa)). One can recognise a UVR domain in the interval 204–239 (DATVARLEKRMKRAVRQEAFEAAARIRDDIQAIRCI). The interval 662-691 (RSTTAPVREEYKEHEHDPQGESPGPGRKTD) is disordered. The segment covering 668-680 (VREEYKEHEHDPQ) has biased composition (basic and acidic residues).

This sequence belongs to the UvrC family. In terms of assembly, interacts with UvrB in an incision complex.

It localises to the cytoplasm. Functionally, the UvrABC repair system catalyzes the recognition and processing of DNA lesions. UvrC both incises the 5' and 3' sides of the lesion. The N-terminal half is responsible for the 3' incision and the C-terminal half is responsible for the 5' incision. The protein is UvrABC system protein C of Treponema pallidum (strain Nichols).